Reading from the N-terminus, the 430-residue chain is Asparagine--tRNA ligase (430 aa).

It belongs to the class-II aminoacyl-tRNA synthetase family. In terms of assembly, homodimer.

It is found in the cytoplasm. It carries out the reaction tRNA(Asn) + L-asparagine + ATP = L-asparaginyl-tRNA(Asn) + AMP + diphosphate + H(+). The sequence is that of Asparagine--tRNA ligase from Bacillus velezensis (strain DSM 23117 / BGSC 10A6 / LMG 26770 / FZB42) (Bacillus amyloliquefaciens subsp. plantarum).